A 338-amino-acid chain; its full sequence is MNLTRAGARLQVLLGHLGRPSAPTIVAQPVSGLASPASFQPEQFQYTLDNNVLTLEQRKFYEENGFLVIKNLVSDDDIQRFRAEFERICREEVKPPGIVIMRDVALAKQDYMPSDRMVSKIQDFQEDEELFRYCLLPEILKYVECFTGPNIMALHGMLINKPPDVGKKTSRHPLHQDLHYFPFRPSNLIVCAWTAMEHIDRNNGCLVVLPGTHKGTLKPHDYPKWEGGVNKMYHGIQDYDPNSPRVHLVMEKGDTVFFHPLLIHGSGRNKTQGFRKAISCHFGSSDCQCIDVSGTSQENIAREVVEMAEKKYGFQGVMDFKDTWIFRSRLVKGERINI.

Residues 1–30 constitute a peroxisome transit peptide; the sequence is MNLTRAGARLQVLLGHLGRPSAPTIVAQPV. N6-succinyllysine occurs at positions 59 and 108. 2-oxoglutarate contacts are provided by residues Lys120, Met157, 175–177, and Trp193; that span reads HQD. Fe cation-binding residues include His175 and Asp177. Residues Lys231 and Lys252 each carry the N6-succinyllysine modification. Position 264 (His264) interacts with Fe cation. Residues Ser266 and Arg275 each coordinate 2-oxoglutarate.

The protein belongs to the PhyH family. Interacts with FKBP52. Interacts with PHYHIP. The cofactor is Fe cation. L-ascorbate is required as a cofactor. ATP serves as cofactor. It depends on Mg(2+) as a cofactor. As to expression, ubiquitously expressed in all tissues with significant levels detected in the embryonic and neonatal heart and liver. In the adult, significant levels are detected in the liver, kidney, heart, gut, brain and aorta.

It is found in the peroxisome. It catalyses the reaction phytanoyl-CoA + 2-oxoglutarate + O2 = 2-hydroxyphytanoyl-CoA + succinate + CO2. It carries out the reaction 3-methylhexadecanoyl-CoA + 2-oxoglutarate + O2 = 2-hydroxy-3-methylhexadecanoyl-CoA + succinate + CO2. The enzyme catalyses hexadecanoyl-CoA + 2-oxoglutarate + O2 = 2-hydroxyhexadecanoyl-CoA + succinate + CO2. The catalysed reaction is octanoyl-CoA + 2-oxoglutarate + O2 = 2-hydroxyoctanoyl-CoA + succinate + CO2. It catalyses the reaction decanoyl-CoA + 2-oxoglutarate + O2 = 2-hydroxydecanoyl-CoA + succinate + CO2. It carries out the reaction 3-methylbutanoyl-CoA + 2-oxoglutarate + O2 = 2-hydroxy-3-methylbutanoyl-CoA + succinate + CO2. The enzyme catalyses heptadecanoyl-CoA + 2-oxoglutarate + O2 = 2-hydroxyheptadecanoyl-CoA + succinate + CO2. The catalysed reaction is eicosanoyl-CoA + 2-oxoglutarate + O2 = 2-hydroxyeicosanoyl-CoA + succinate + CO2. It catalyses the reaction octadecanoyl-CoA + 2-oxoglutarate + O2 = 2-hydroxyoctadecanoyl-CoA + succinate + CO2. It carries out the reaction dodecanoyl-CoA + 2-oxoglutarate + O2 = 2-hydroxydodecanoyl-CoA + succinate + CO2. The enzyme catalyses tetradecanoyl-CoA + 2-oxoglutarate + O2 = 2-hydroxytetradecanoyl-CoA + succinate + CO2. The catalysed reaction is hexanoyl-CoA + 2-oxoglutarate + O2 = 2-hydroxyhexanoyl-CoA + succinate + CO2. It catalyses the reaction butanoyl-CoA + 2-oxoglutarate + O2 = 2-hydroxybutanoyl-CoA + succinate + CO2. It carries out the reaction 3-methylnonanoyl-CoA + 2-oxoglutarate + O2 = 2-hydroxy-3-methylnonanoyl-CoA + succinate + CO2. The enzyme catalyses 3-methylundecanoyl-CoA + 2-oxoglutarate + O2 = 2-hydroxy-3-methylundecanoyl-CoA + succinate + CO2. The catalysed reaction is 3-methyldodecanoyl-CoA + 2-oxoglutarate + O2 = 2-hydroxy-3-methyldodecanoyl-CoA + succinate + CO2. It functions in the pathway lipid metabolism; fatty acid metabolism. Its function is as follows. Catalyzes the 2-hydroxylation of not only racemic phytanoyl-CoA and the isomers of 3-methylhexadecanoyl-CoA, but also a variety of other mono-branched 3-methylacyl-CoA esters (with a chain length of at least seven carbon atoms) and straight-chain acyl-CoA esters (with a chain length longer than four carbon atoms). Does not hydroxylate long and very long straight chain acyl-CoAs or 2-methyl-and 4-methyl-branched acyl-CoAs. The protein is Phytanoyl-CoA dioxygenase, peroxisomal (Phyh) of Mus musculus (Mouse).